We begin with the raw amino-acid sequence, 113 residues long: MTRVKRGYVAVRRRNRVLERAAGFRGAHSRLFRPAKQQVMKALVASKRDRDKRKRDFRKLWITRINAAVRKQGMSYSRFIHQLYQSKILINRKMIAQIAVLDENGFTSIVNNI.

Belongs to the bacterial ribosomal protein bL20 family.

Its subcellular location is the plastid. The protein resides in the chloroplast. In terms of biological role, binds directly to 23S ribosomal RNA and is necessary for the in vitro assembly process of the 50S ribosomal subunit. It is not involved in the protein synthesizing functions of that subunit. This Staurastrum punctulatum (Green alga) protein is Large ribosomal subunit protein bL20c.